A 340-amino-acid chain; its full sequence is Ketol-acid reductoisomerase (NADP(+)) (340 aa).

A KARI N-terminal Rossmann domain is found at 1–183; it reads MAITVYYDKD…GGGRTGIIET (183 aa). Residues 26–29, arginine 49, serine 52, serine 54, and 84–87 each bind NADP(+); these read FGSQ and DEIQ. Residue histidine 109 is part of the active site. Glycine 135 serves as a coordination point for NADP(+). In terms of domain architecture, KARI C-terminal knotted spans 184–329; the sequence is TFKAETETDL…RNLRAMMPWI (146 aa). Mg(2+)-binding residues include aspartate 192, glutamate 196, glutamate 228, and glutamate 232. Serine 253 is a binding site for substrate.

Belongs to the ketol-acid reductoisomerase family. It depends on Mg(2+) as a cofactor.

It carries out the reaction (2R)-2,3-dihydroxy-3-methylbutanoate + NADP(+) = (2S)-2-acetolactate + NADPH + H(+). It catalyses the reaction (2R,3R)-2,3-dihydroxy-3-methylpentanoate + NADP(+) = (S)-2-ethyl-2-hydroxy-3-oxobutanoate + NADPH + H(+). It participates in amino-acid biosynthesis; L-isoleucine biosynthesis; L-isoleucine from 2-oxobutanoate: step 2/4. The protein operates within amino-acid biosynthesis; L-valine biosynthesis; L-valine from pyruvate: step 2/4. Involved in the biosynthesis of branched-chain amino acids (BCAA). Catalyzes an alkyl-migration followed by a ketol-acid reduction of (S)-2-acetolactate (S2AL) to yield (R)-2,3-dihydroxy-isovalerate. In the isomerase reaction, S2AL is rearranged via a Mg-dependent methyl migration to produce 3-hydroxy-3-methyl-2-ketobutyrate (HMKB). In the reductase reaction, this 2-ketoacid undergoes a metal-dependent reduction by NADPH to yield (R)-2,3-dihydroxy-isovalerate. This is Ketol-acid reductoisomerase (NADP(+)) from Campylobacter jejuni subsp. jejuni serotype O:2 (strain ATCC 700819 / NCTC 11168).